Here is a 363-residue protein sequence, read N- to C-terminus: Chorismate synthase (363 aa).

Residue Arg-48 participates in NADP(+) binding. Residues 125 to 127, 238 to 239, Gly-278, 293 to 297, and Arg-319 contribute to the FMN site; these read RSS, NA, and KPTAS.

This sequence belongs to the chorismate synthase family. Homotetramer. Requires FMNH2 as cofactor.

The enzyme catalyses 5-O-(1-carboxyvinyl)-3-phosphoshikimate = chorismate + phosphate. It functions in the pathway metabolic intermediate biosynthesis; chorismate biosynthesis; chorismate from D-erythrose 4-phosphate and phosphoenolpyruvate: step 7/7. Its function is as follows. Catalyzes the anti-1,4-elimination of the C-3 phosphate and the C-6 proR hydrogen from 5-enolpyruvylshikimate-3-phosphate (EPSP) to yield chorismate, which is the branch point compound that serves as the starting substrate for the three terminal pathways of aromatic amino acid biosynthesis. This reaction introduces a second double bond into the aromatic ring system. This chain is Chorismate synthase, found in Acinetobacter baumannii (strain SDF).